Consider the following 263-residue polypeptide: Receptor expression-enhancing protein 3-A (263 aa).

Transmembrane regions (helical) follow at residues V2–F22 and Y35–A55. 2 disordered regions span residues G161–S228 and Y240–L263. A compositionally biased stretch (acidic residues) spans D199–V214. A compositionally biased stretch (basic residues) spans S242–P251.

Belongs to the DP1 family.

The protein localises to the endoplasmic reticulum membrane. Functionally, microtubule-binding protein required to ensure proper cell division and nuclear envelope reassembly by sequestering the endoplasmic reticulum away from chromosomes during mitosis. Probably acts by clearing the endoplasmic reticulum membrane from metaphase chromosomes. The polypeptide is Receptor expression-enhancing protein 3-A (reep3-a) (Xenopus laevis (African clawed frog)).